A 683-amino-acid polypeptide reads, in one-letter code: Rhophilin-2-A (683 aa).

The 75-residue stretch at K25 to V99 folds into the REM-1 domain. Residues P110–L501 enclose the BRO1 domain. One can recognise a PDZ domain in the interval K515–I592.

This sequence belongs to the RHPN family. In terms of assembly, interacts with RhoA.

The protein resides in the cytoplasm. Its subcellular location is the perinuclear region. Its function is as follows. Binds specifically to GTP-Rho. In Xenopus laevis (African clawed frog), this protein is Rhophilin-2-A (rhpn2-a).